Consider the following 531-residue polypeptide: Probable bifunctional methylthioribulose-1-phosphate dehydratase/enolase-phosphatase E1 2 (531 aa).

Positions 1-248 (MGVPSEGAVG…AIKLHQLGLD (248 aa)) are methylthioribulose-1-phosphate dehydratase. Cys120 serves as a coordination point for substrate. Residues His138 and His140 each contribute to the Zn(2+) site. The active-site Proton donor/acceptor; for methylthioribulose-1-phosphate dehydratase activity is the Glu163. Position 213 (His213) interacts with Zn(2+). The interval 292 to 531 (ILLDIEGTTT…FRTIETFLEI (240 aa)) is enolase-phosphatase E1. Positions 295 and 297 each coordinate Mg(2+). Substrate-binding positions include 430-431 (SS) and Lys464. Mg(2+) is bound at residue Asp490.

The protein in the N-terminal section; belongs to the aldolase class II family. MtnB subfamily. In the C-terminal section; belongs to the HAD-like hydrolase superfamily. MasA/MtnC family. Requires Zn(2+) as cofactor. Mg(2+) serves as cofactor.

The catalysed reaction is 5-(methylsulfanyl)-D-ribulose 1-phosphate = 5-methylsulfanyl-2,3-dioxopentyl phosphate + H2O. The enzyme catalyses 5-methylsulfanyl-2,3-dioxopentyl phosphate + H2O = 1,2-dihydroxy-5-(methylsulfanyl)pent-1-en-3-one + phosphate. The protein operates within amino-acid biosynthesis; L-methionine biosynthesis via salvage pathway; L-methionine from S-methyl-5-thio-alpha-D-ribose 1-phosphate: step 2/6. It participates in amino-acid biosynthesis; L-methionine biosynthesis via salvage pathway; L-methionine from S-methyl-5-thio-alpha-D-ribose 1-phosphate: step 3/6. It functions in the pathway amino-acid biosynthesis; L-methionine biosynthesis via salvage pathway; L-methionine from S-methyl-5-thio-alpha-D-ribose 1-phosphate: step 4/6. This Vitis vinifera (Grape) protein is Probable bifunctional methylthioribulose-1-phosphate dehydratase/enolase-phosphatase E1 2.